Consider the following 36-residue polypeptide: Pancreatic polypeptide (36 aa).

Tyr36 is modified (tyrosine amide).

The protein belongs to the NPY family.

It is found in the secreted. Hormone secreted by pancreatic cells that acts as a regulator of pancreatic and gastrointestinal functions probably by signaling through the G protein-coupled receptor NPY4R2. This is Pancreatic polypeptide (PPY) from Oryctolagus cuniculus (Rabbit).